The following is a 409-amino-acid chain: Lissencephaly-1 homolog (409 aa).

Residues 7 to 39 (QKEELNKAIADYLHQCGFEDTLNAFKQDANMPG) enclose the LisH domain. Positions 54–80 (TSVIRLQKKVMDLETRLSEAEKEVHHG) form a coiled coil. Residues 72–95 (EAEKEVHHGGGPKKTRSPEDWIPR) form a disordered region. WD repeat units lie at residues 104 to 145 (GHRS…RTLK), 146 to 187 (GHTD…RTLH), 188 to 229 (GHDH…KTFQ), 231 to 269 (HGEW…CKCD), 272 to 332 (DHDH…CLVT), 335 to 374 (GHDN…CAKT), and 377 to 409 (AHEH…WECR).

The protein belongs to the WD repeat LIS1/nudF family.

The protein resides in the cytoplasm. It localises to the cytoskeleton. It is found in the microtubule organizing center. Its subcellular location is the centrosome. Positively regulates the activity of the minus-end directed microtubule motor protein dynein. May enhance dynein-mediated microtubule sliding by targeting dynein to the microtubule plus end. Required for several dynein- and microtubule-dependent processes. This Nematostella vectensis (Starlet sea anemone) protein is Lissencephaly-1 homolog.